Here is a 594-residue protein sequence, read N- to C-terminus: Elongation factor 4 (594 aa).

Residues 2–184 (KNIRNFSIIA…TIVAKVPAPE (183 aa)) enclose the tr-type G domain. Residues 14-19 (DHGKST) and 131-134 (NKID) each bind GTP.

Belongs to the TRAFAC class translation factor GTPase superfamily. Classic translation factor GTPase family. LepA subfamily.

The protein resides in the cell inner membrane. The catalysed reaction is GTP + H2O = GDP + phosphate + H(+). Its function is as follows. Required for accurate and efficient protein synthesis under certain stress conditions. May act as a fidelity factor of the translation reaction, by catalyzing a one-codon backward translocation of tRNAs on improperly translocated ribosomes. Back-translocation proceeds from a post-translocation (POST) complex to a pre-translocation (PRE) complex, thus giving elongation factor G a second chance to translocate the tRNAs correctly. Binds to ribosomes in a GTP-dependent manner. In Francisella tularensis subsp. novicida (strain U112), this protein is Elongation factor 4.